The following is a 468-amino-acid chain: Heat stress transcription factor A-1e (468 aa).

Residues 21 to 115 (IPPFLSKTYD…ILKSIVRRKP (95 aa)) mediate DNA binding. The hydrophobic repeat HR-A/B stretch occupies residues 133-199 (ACVEVGKFGL…QMMSFLAKAV (67 aa)). The segment covering 211–220 (QSNEANQHIS) has biased composition (polar residues). Disordered stretches follow at residues 211–244 (QSNEANQHISESNKKRRLPVEDQMNSGSHGVNGL) and 268–309 (QMSN…PEVT). The Nuclear localization signal signature appears at 223 to 227 (NKKRR). Residues 277–305 (SLSSNNGSFLLGDVPNSNISDNGSSSNGS) show a composition bias toward low complexity. Residues 402–411 (DSFWEQFIGE) carry the AHA motif. The Nuclear export signal motif lies at 454–461 (LTEQMGLL).

This sequence belongs to the HSF family. Class A subfamily. As to quaternary structure, homotrimer. Exhibits temperature-dependent phosphorylation.

Its subcellular location is the cytoplasm. It localises to the nucleus. Transcriptional activator that specifically binds DNA sequence 5'-AGAAnnTTCT-3' known as heat shock promoter elements (HSE). The protein is Heat stress transcription factor A-1e (HSFA1E) of Arabidopsis thaliana (Mouse-ear cress).